Reading from the N-terminus, the 216-residue chain is Protein-L-isoaspartate O-methyltransferase 1 (216 aa).

Ser-60 is a catalytic residue.

The protein belongs to the methyltransferase superfamily. L-isoaspartyl/D-aspartyl protein methyltransferase family.

Its subcellular location is the cytoplasm. It catalyses the reaction [protein]-L-isoaspartate + S-adenosyl-L-methionine = [protein]-L-isoaspartate alpha-methyl ester + S-adenosyl-L-homocysteine. Catalyzes the methyl esterification of L-isoaspartyl residues in peptides and proteins that result from spontaneous decomposition of normal L-aspartyl and L-asparaginyl residues. It plays a role in the repair and/or degradation of damaged proteins. The sequence is that of Protein-L-isoaspartate O-methyltransferase 1 (pcm1) from Archaeoglobus fulgidus (strain ATCC 49558 / DSM 4304 / JCM 9628 / NBRC 100126 / VC-16).